The chain runs to 905 residues: A disintegrin and metalloproteinase with thrombospondin motifs 8 (905 aa).

The N-terminal stretch at 1-28 (MLRDPTTTGWPPLLLLLLQLPPPPLVCG) is a signal peptide. A propeptide spanning residues 29-228 (APAGPGTGAQ…PFGSKTRSKR (200 aa)) is cleaved from the precursor. 2 disordered regions span residues 139 to 163 (PQGA…RRED) and 186 to 225 (NGQG…SKTR). Residues 191–215 (ERSDNEEDRKQDKEGLLKETEDSRK) are compositionally biased toward basic and acidic residues. In terms of domain architecture, Peptidase M12B spans 234–444 (RFVETLLVAD…GHGDCLLDAP (211 aa)). 10 cysteine pairs are disulfide-bonded: Cys309–Cys362, Cys338–Cys344, Cys356–Cys439, Cys394–Cys423, Cys478–Cys502, Cys487–Cys523, Cys517–Cys528, Cys554–Cys591, Cys558–Cys596, and Cys569–Cys581. His378 is a binding site for Zn(2+). Glu379 is an active-site residue. His382 and His388 together coordinate Zn(2+). Residues Asn415, Asn480, and Asn506 are each glycosylated (N-linked (GlcNAc...) asparagine). The Disintegrin domain maps to 453–541 (GLPGHSTLYE…EDVENPKAVV (89 aa)). In terms of domain architecture, TSP type-1 1 spans 542–597 (DGDWGPWRPWGQCSRTCGGGIQFSNRECDNPMPQNGGRFCLGERVKYQSCNTEECP). The N-linked (GlcNAc...) asparagine glycan is linked to Asn615. The tract at residues 706 to 847 (RKISGSFTPF…RATTNIIQSL (142 aa)) is spacer. The TSP type-1 2 domain maps to 848-904 (PSAEWVLGDWSECPSTCRGSWQRRTVECRDPSGQASDTCDEALKPEDAKPCGSQPCP). The interval 877–905 (DPSGQASDTCDEALKPEDAKPCGSQPCPL) is disordered.

It depends on Zn(2+) as a cofactor. In terms of processing, the precursor is cleaved by a furin endopeptidase. Post-translationally, glycosylated. Can be O-fucosylated by POFUT2 on a serine or a threonine residue found within the consensus sequence C1-X(2)-(S/T)-C2-G of the TSP type-1 repeat domains where C1 and C2 are the first and second cysteine residue of the repeat, respectively. Fucosylated repeats can then be further glycosylated by the addition of a beta-1,3-glucose residue by the glucosyltransferase, B3GALTL. Fucosylation mediates the efficient secretion of ADAMTS family members. Can also be C-glycosylated with one or two mannose molecules on tryptophan residues within the consensus sequence W-X-X-W of the TPRs, and N-glycosylated. These other glycosylations can also facilitate secretion. Expressed specifically in adult lung and heart and low expression during mouse development.

It is found in the secreted. It localises to the extracellular space. Its subcellular location is the extracellular matrix. Its function is as follows. Has anti-angiogenic properties. This Mus musculus (Mouse) protein is A disintegrin and metalloproteinase with thrombospondin motifs 8 (Adamts8).